We begin with the raw amino-acid sequence, 969 residues long: Poly(ADP-ribose) glycohydrolase (969 aa).

3 disordered regions span residues 1 to 149, 161 to 341, and 368 to 400; these read MSAG…QQQT, HAEQ…CQAR, and NNAG…GKRD. Residues 1-449 form an A-domain region; that stretch reads MSAGPGWEPC…LPPEKKWLGT (449 aa). The Nuclear localization signal motif lies at 10 to 16; that stretch reads CTKRPRW. Residues 69 to 84 show a composition bias toward polar residues; that stretch reads NATSFVFKQKTITTWM. The PIP-box (PCNA interacting peptide) motif lies at 77 to 84; sequence QKTITTWM. The span at 87 to 100 shows a compositional bias: basic and acidic residues; it reads KGPKTAESESKENN. Over residues 101–113 the composition is skewed to polar residues; it reads NTRIDSMMSSVQK. The segment covering 116 to 125 has biased composition (basic and acidic residues); that stretch reads FYPHKVEKLE. Polar residues-rich tracts occupy residues 128 to 149 and 179 to 189; these read PQLN…QQQT and QLSNANIGQSP. At serine 135 the chain carries Phosphoserine. Residue threonine 137 is modified to Phosphothreonine. Over residues 190–205 the composition is skewed to basic and acidic residues; sequence HTDDHSDTDHEEDRDN. Serine 195 is modified (phosphoserine). Residue threonine 197 is modified to Phosphothreonine. A compositionally biased stretch (polar residues) spans 226 to 237; it reads ARSNCKCSGSRQ. Residues serine 256, serine 259, serine 281, serine 286, serine 293, serine 297, and serine 311 each carry the phosphoserine modification. Positions 275–284 are enriched in polar residues; that stretch reads KLTGQESSLG. Residues 311 to 325 are compositionally biased toward acidic residues; that stretch reads SEADEETSPVFDEQD. Composition is skewed to polar residues over residues 329 to 339 and 369 to 387; these read SQTANKLSSCQ and NAGT…SSLN. At lysine 334 the chain carries N6-acetyllysine. The tract at residues 603-788 is catalytic; the sequence is QPIPLLKQKM…TEQYSEYTGY (186 aa). A substrate-binding site is contributed by 719–720; the sequence is IE. Residue aspartate 730 is part of the active site. Substrate is bound by residues asparagine 733 and glutamine 747. Active-site residues include glutamate 748 and glutamate 749. Substrate-binding positions include tyrosine 788 and 862–867; that span reads NWGCGA.

This sequence belongs to the poly(ADP-ribose) glycohydrolase family. Interacts with PCNA. Interacts with NUDT5.

The protein localises to the nucleus. It catalyses the reaction [(1''-&gt;2')-ADP-alpha-D-ribose](n) + H2O = [(1''-&gt;2')-ADP-alpha-D-ribose](n-1) + ADP-D-ribose. In terms of biological role, poly(ADP-ribose) glycohydrolase that degrades poly(ADP-ribose) by hydrolyzing the ribose-ribose bonds present in poly(ADP-ribose). PARG acts both as an endo- and exoglycosidase, releasing poly(ADP-ribose) of different length as well as ADP-ribose monomers. It is however unable to cleave the ester bond between the terminal ADP-ribose and ADP-ribosylated residues, leaving proteins that are mono-ADP-ribosylated. Poly(ADP-ribose) is synthesized after DNA damage is only present transiently and is rapidly degraded by PARG. Required to prevent detrimental accumulation of poly(ADP-ribose) upon prolonged replicative stress, while it is not required for recovery from transient replicative stress. Responsible for the prevalence of mono-ADP-ribosylated proteins in cells, thanks to its ability to degrade poly(ADP-ribose) without cleaving the terminal protein-ribose bond. Required for retinoid acid-dependent gene transactivation, probably by removing poly(ADP-ribose) from histone demethylase KDM4D, allowing chromatin derepression at RAR-dependent gene promoters. Involved in the synthesis of ATP in the nucleus, together with PARP1, NMNAT1 and NUDT5. Nuclear ATP generation is required for extensive chromatin remodeling events that are energy-consuming. This is Poly(ADP-ribose) glycohydrolase from Mus musculus (Mouse).